Consider the following 347-residue polypeptide: NADH-quinone oxidoreductase subunit H (347 aa).

Helical transmembrane passes span 14 to 34 (IMIG…AYIL), 82 to 102 (AVFL…WAVI), 115 to 135 (VGIL…IMGG), 161 to 181 (IGFV…TDIV), 198 to 218 (LLDW…ISAL), 258 to 278 (AIVL…LPPL), 285 to 305 (WVPG…MFGI), and 321 to 341 (LGWK…AFVL).

This sequence belongs to the complex I subunit 1 family. As to quaternary structure, NDH-1 is composed of 14 different subunits. Subunits NuoA, H, J, K, L, M, N constitute the membrane sector of the complex.

The protein localises to the cell inner membrane. The enzyme catalyses a quinone + NADH + 5 H(+)(in) = a quinol + NAD(+) + 4 H(+)(out). Functionally, NDH-1 shuttles electrons from NADH, via FMN and iron-sulfur (Fe-S) centers, to quinones in the respiratory chain. The immediate electron acceptor for the enzyme in this species is believed to be ubiquinone. Couples the redox reaction to proton translocation (for every two electrons transferred, four hydrogen ions are translocated across the cytoplasmic membrane), and thus conserves the redox energy in a proton gradient. This subunit may bind ubiquinone. The polypeptide is NADH-quinone oxidoreductase subunit H (Allorhizobium ampelinum (strain ATCC BAA-846 / DSM 112012 / S4) (Agrobacterium vitis (strain S4))).